The chain runs to 215 residues: MILLKRMRDDIKMVFEQDPAARSTLEVITTYAGLHAVWSHLIAHKLYNQKKYVAARAISQISRFFTGIEIHPGAKIGKRLFIDHGMGVVIGETCTIGDNVTIYQGVTLGGTGKERGKRHPDIGDNVLIAAGAKVLGNIKINSNVNIGANSVVLQSVPSYSTVVGIPGHIVKQDGVRVGKTFDHRHLPDPIYEQIKHLERQLEKTRNGEIQDDYII.

Belongs to the transferase hexapeptide repeat family.

The protein localises to the cytoplasm. The enzyme catalyses L-serine + acetyl-CoA = O-acetyl-L-serine + CoA. It functions in the pathway amino-acid biosynthesis; L-cysteine biosynthesis; L-cysteine from L-serine: step 1/2. This Staphylococcus aureus (strain MRSA252) protein is Serine acetyltransferase (cysE).